The following is a 149-amino-acid chain: Early lymphoid activation gene protein (149 aa).

As to expression, expressed in heart, kidney, lung, and skeletal muscle, with lower levels in pancreas and liver.

May function as an early signal that helps mediate the activation of T-cells. This chain is Early lymphoid activation gene protein (DIAPH2-AS1), found in Homo sapiens (Human).